Here is a 1032-residue protein sequence, read N- to C-terminus: MGFCRSALHPLSLLVQAIMLAMTLALGTLPAFLPCELQPHGLVNCNWLFLKSVPHFSMAAPRGNVTSLSLSSNRIHHLHDSDFAHLPSLRHLNLKWNCPPVGLSPMHFPCHMTIEPSTFLAVPTLEELNLSYNNIMTVPALPKSLISLSLSHTNILMLDSASLAGLHALRFLFMDGNCYYKNPCRQALEVAPGALLGLGNLTHLSLKYNNLTVVPRNLPSSLEYLLLSYNRIVKLAPEDLANLTALRVLDVGGNCRRCDHAPNPCMECPRHFPQLHPDTFSHLSRLEGLVLKDSSLSWLNASWFRGLGNLRVLDLSENFLYKCITKTKAFQGLTQLRKLNLSFNYQKRVSFAHLSLAPSFGSLVALKELDMHGIFFRSLDETTLRPLARLPMLQTLRLQMNFINQAQLGIFRAFPGLRYVDLSDNRISGASELTATMGEADGGEKVWLQPGDLAPAPVDTPSSEDFRPNCSTLNFTLDLSRNNLVTVQPEMFAQLSHLQCLRLSHNCISQAVNGSQFLPLTGLQVLDLSHNKLDLYHEHSFTELPRLEALDLSYNSQPFGMQGVGHNFSFVAHLRTLRHLSLAHNNIHSQVSQQLCSTSLRALDFSGNALGHMWAEGDLYLHFFQGLSGLIWLDLSQNRLHTLLPQTLRNLPKSLQVLRLRDNYLAFFKWWSLHFLPKLEVLDLAGNQLKALTNGSLPAGTRLRRLDVSCNSISFVAPGFFSKAKELRELNLSANALKTVDHSWFGPLASALQILDVSANPLHCACGAAFMDFLLEVQAAVPGLPSRVKCGSPGQLQGLSIFAQDLRLCLDEALSWDCFALSLLAVALGLGVPMLHHLCGWDLWYCFHLCLAWLPWRGRQSGRDEDALPYDAFVVFDKTQSAVADWVYNELRGQLEECRGRWALRLCLEERDWLPGKTLFENLWASVYGSRKTLFVLAHTDRVSGLLRASFLLAQQRLLEDRKDVVVLVILSPDGRRSRYVRLRQRLCRQSVLLWPHQPSGQRSFWAQLGMALTRDNHHFYNRNFCQGPTAE.

Residues 1 to 25 (MGFCRSALHPLSLLVQAIMLAMTLA) form the signal peptide. At 26–818 (LGTLPAFLPC…CLDEALSWDC (793 aa)) the chain is on the extracellular side. A disulfide bridge links Cys35 with Cys45. 47 to 51 (WLFLK) provides a ligand contact to DNA. 14 LRR repeats span residues 62–85 (RGNV…DFAH), 87–110 (PSLR…HFPC), 122–147 (VPTL…SLIS), 150–166 (LSHT…LAGL), 167–190 (HALR…ALEV), 198–221 (LGNL…LPSS), 223–242 (EYLL…DLAN), 243–268 (LTAL…CMEC), 283–306 (LSRL…WFRG), 308–332 (GNLR…AFQG), 333–356 (LTQL…HLSL), 363–386 (LVAL…TLRP), 390–413 (LPML…IFRA), and 415–440 (PGLR…MGEA). Residue Asn64 is glycosylated (N-linked (GlcNAc...) asparagine). Residues 72–77 (SNRIHH) and 95–109 (KWNC…MHFP) each bind DNA. Cys98 and Cys110 are joined by a disulfide. Asn129 is a glycosylation site (N-linked (GlcNAc...) asparagine). Tyr132 contributes to the DNA binding site. The cysteines at positions 178 and 184 are disulfide-linked. A DNA-binding site is contributed by 179 to 181 (YYK). The N-linked (GlcNAc...) asparagine glycan is linked to Asn200. Position 208 (Tyr208) interacts with DNA. 2 N-linked (GlcNAc...) asparagine glycosylation sites follow: Asn210 and Asn242. Cystine bridges form between Cys255-Cys268 and Cys258-Cys265. S-palmitoyl cysteine attachment occurs at residues Cys258 and Cys265. The N-linked (GlcNAc...) asparagine glycan is linked to Asn300. An N-linked (GlcNAc...) asparagine glycan is attached at Asn340. N-linked (GlcNAc...) asparagine glycosylation is found at Asn469, Asn474, and Asn513. 12 LRR repeats span residues 470-494 (CSTL…MFAQ), 496-519 (SHLQ…QFLP), 520-543 (LTGL…SFTE), 545-572 (PRLE…SFVA), 574-598 (LRTL…LCST), 600-622 (LRAL…LYLH), 627-650 (LSGL…TLRN), 652-675 (PKSL…SLHF), 676-699 (LPKL…SLPA), 701-723 (TRLR…FFSK), 724-747 (AKEL…WFGP), and 749-772 (ASAL…AFMD). Residues Cys470 and Cys500 are joined by a disulfide bond. Asn567 carries N-linked (GlcNAc...) asparagine glycosylation. An N-linked (GlcNAc...) asparagine glycan is attached at Asn694. Asn731 is a glycosylation site (N-linked (GlcNAc...) asparagine). 2 cysteine pairs are disulfide-bonded: Cys764–Cys790 and Cys766–Cys809. A helical transmembrane segment spans residues 819-839 (FALSLLAVALGLGVPMLHHLC). Over 840 to 1032 (GWDLWYCFHL…RNFCQGPTAE (193 aa)) the chain is Cytoplasmic. A TIR domain is found at 868–1013 (LPYDAFVVFD…SFWAQLGMAL (146 aa)).

Belongs to the Toll-like receptor family. As to quaternary structure, monomer and homodimer. Exists as a monomer in the absence of unmethylated cytidine-phosphate-guanosine (CpG) ligand. Proteolytic processing of an insertion loop (Z-loop) is required for homodimerization upon binding to the unmethylated CpG ligand leading to its activation. Interacts with MYD88 via their respective TIR domains. Interacts with BTK. Interacts (via transmembrane domain) with UNC93B1. Interacts with CD300LH; the interaction may promote full activation of TLR9-triggered innate responses. Interacts with CNPY3 and HSP90B1; this interaction is required for proper folding in the endoplasmic reticulum. Interacts with SMPDL3B. Interacts with CD82; this interaction is essential for TLR9-dependent myddosome formation in response to CpG stimulation. Activated by proteolytic cleavage of the flexible loop between repeats LRR14 and LRR15 within the ectodomain. Cleavage requires UNC93B1. Proteolytically processed by first removing the majority of the ectodomain by either asparagine endopeptidase (AEP) or a cathepsin followed by a trimming event that is solely cathepsin mediated and required for optimal receptor signaling. Post-translationally, palmitoylated by ZDHHC3 in the Golgi regulates TLR9 trafficking from the Golgi to endosomes. Depalmitoylation by PPT1 controls the release of TLR9 from UNC93B1 in endosomes. Highly expressed in spleen, lymph node, tonsil and peripheral blood leukocytes, especially in plasmacytoid pre-dendritic cells. Levels are much lower in monocytes and CD11c+ immature dendritic cells. Also detected in lung and liver.

It localises to the endoplasmic reticulum membrane. It is found in the early endosome membrane. The protein resides in the lysosome. Its subcellular location is the cytoplasmic vesicle. The protein localises to the phagosome. It localises to the golgi apparatus membrane. Its function is as follows. Key component of innate and adaptive immunity. TLRs (Toll-like receptors) control host immune response against pathogens through recognition of molecular patterns specific to microorganisms. TLR9 is a nucleotide-sensing TLR which is activated by unmethylated cytidine-phosphate-guanosine (CpG) dinucleotides. Acts via MYD88 and TRAF6, leading to NF-kappa-B activation, cytokine secretion and the inflammatory response. Controls lymphocyte response to Helicobacter infection. Upon CpG stimulation, induces B-cell proliferation, activation, survival and antibody production. The polypeptide is Toll-like receptor 9 (TLR9) (Homo sapiens (Human)).